A 630-amino-acid polypeptide reads, in one-letter code: Beta-phellandrene synthase, chloroplastic (630 aa).

A chloroplast-targeting transit peptide spans 1-48; that stretch reads MALVSSAPKSCLHKSLIRSTHHELKPLRRTIPTLGMCRRGKSFTPSVS. Mg(2+) contacts are provided by Asp381, Asp385, and Asp533. Residues 381 to 385 carry the DDXXD motif motif; it reads DDIYD.

It belongs to the terpene synthase family. Tpsd subfamily. The cofactor is Mg(2+). Requires Mn(2+) as cofactor. It depends on K(+) as a cofactor.

It is found in the plastid. The protein resides in the chloroplast. It catalyses the reaction (2E)-geranyl diphosphate = (-)-beta-phellandrene + diphosphate. Its pathway is terpene metabolism; oleoresin biosynthesis. Its function is as follows. Converts geranyl diphosphate to four products with (-)-(4S)-beta-phellandrene (52%) as the major olefin, and lesser amounts of (-)-(1S,5S)-beta-pinene (34%), (-)-1S,5S-alpha-pinene (8.5%), and (-)-(4S)-limonene (6%). Involved in defensive oleoresin formation in conifers in response to insect attack or other injury. Involved in monoterpene (C10) olefins biosynthesis. The protein is Beta-phellandrene synthase, chloroplastic (ag8) of Abies grandis (Grand fir).